The sequence spans 143 residues: S-adenosylmethionine decarboxylase proenzyme (143 aa).

Catalysis depends on Ser-66, which acts as the Schiff-base intermediate with substrate; via pyruvic acid. Ser-66 carries the post-translational modification Pyruvic acid (Ser); by autocatalysis. His-71 functions as the Proton acceptor; for processing activity in the catalytic mechanism. Cys-86 functions as the Proton donor; for catalytic activity in the catalytic mechanism.

This sequence belongs to the prokaryotic AdoMetDC family. Type 1 subfamily. Heterotetramer of two alpha and two beta chains arranged as a dimer of alpha/beta heterodimers. Pyruvate is required as a cofactor. In terms of processing, is synthesized initially as an inactive proenzyme. Formation of the active enzyme involves a self-maturation process in which the active site pyruvoyl group is generated from an internal serine residue via an autocatalytic post-translational modification. Two non-identical subunits are generated from the proenzyme in this reaction, and the pyruvate is formed at the N-terminus of the alpha chain, which is derived from the carboxyl end of the proenzyme. The post-translation cleavage follows an unusual pathway, termed non-hydrolytic serinolysis, in which the side chain hydroxyl group of the serine supplies its oxygen atom to form the C-terminus of the beta chain, while the remainder of the serine residue undergoes an oxidative deamination to produce ammonia and the pyruvoyl group blocking the N-terminus of the alpha chain.

It catalyses the reaction S-adenosyl-L-methionine + H(+) = S-adenosyl 3-(methylsulfanyl)propylamine + CO2. It functions in the pathway amine and polyamine biosynthesis; S-adenosylmethioninamine biosynthesis; S-adenosylmethioninamine from S-adenosyl-L-methionine: step 1/1. Its function is as follows. Catalyzes the decarboxylation of S-adenosylmethionine to S-adenosylmethioninamine (dcAdoMet), the propylamine donor required for the synthesis of the polyamines spermine and spermidine from the diamine putrescine. The chain is S-adenosylmethionine decarboxylase proenzyme from Thermococcus gammatolerans (strain DSM 15229 / JCM 11827 / EJ3).